The chain runs to 439 residues: ATP-dependent RNA helicase SrmB (439 aa).

The Q motif signature appears at 4 to 32 (SQFEQFDLSPELLKALEKKGYSRPTAIQM). One can recognise a Helicase ATP-binding domain in the interval 35–209 (IPAAMEESDV…AERLLNDPVK (175 aa)). 48–55 (APTGTGKT) provides a ligand contact to ATP. The DEAD box signature appears at 157–160 (DEAD). The 151-residue stretch at 237–387 (KLLARFIETE…GLEPRTKPPK (151 aa)) folds into the Helicase C-terminal domain. Positions 381–393 (PRTKPPKDGEVKS) are enriched in basic and acidic residues. Residues 381 to 439 (PRTKPPKDGEVKSVSKKQKARIKEKREEKKKTEAKKKVKLRHKDTKNIGKRRKPSNSNV) form a disordered region. Composition is skewed to basic residues over residues 394–403 (VSKKQKARIK) and 412–439 (TEAK…NSNV).

It belongs to the DEAD box helicase family. SrmB subfamily. As to quaternary structure, interacts with the 50S ribosomal subunit.

The protein resides in the cytoplasm. It carries out the reaction ATP + H2O = ADP + phosphate + H(+). DEAD-box RNA helicase involved in the assembly of the 50S ribosomal subunit at low temperature. Exhibits RNA-stimulated ATP hydrolysis and RNA unwinding activity. The protein is ATP-dependent RNA helicase SrmB of Haemophilus influenzae (strain ATCC 51907 / DSM 11121 / KW20 / Rd).